The sequence spans 214 residues: Large ribosomal subunit protein uL3 (214 aa).

An N5-methylglutamine modification is found at Gln-153.

The protein belongs to the universal ribosomal protein uL3 family. Part of the 50S ribosomal subunit. Forms a cluster with proteins L14 and L19. Post-translationally, methylated by PrmB.

Its function is as follows. One of the primary rRNA binding proteins, it binds directly near the 3'-end of the 23S rRNA, where it nucleates assembly of the 50S subunit. This is Large ribosomal subunit protein uL3 from Methylobacillus flagellatus (strain ATCC 51484 / DSM 6875 / VKM B-1610 / KT).